The primary structure comprises 313 residues: MSRPSSAGPCASKPCGKQKQPPPPPPHAPSLPATISGGPGASAPPAPTAAAITGPLSQQHQELTSLFECPVCFDYVLPPILQCQAGHLVCNQCRQKLSCCPTCRASLTPSIRNLAMEKVASAVLFPCKYASTGCSLSLHHTEKPEHEDICEYRPYSCPCPGASCKWQGSLENVMQHLTHSHKSITTLQGEDIVFLATDINLPGAVDWVMMQYCFNHHFMLVLEKQEKYEGHQQFFAIVLLIGTRKQAENYAYRLELNGNRRRLTWEATPRSIHDGVAAAIMNSDCLVFDTAIAHLFADNGNLGINVTISTCCP.

Positions 1–49 are disordered; sequence MSRPSSAGPCASKPCGKQKQPPPPPPHAPSLPATISGGPGASAPPAPTA. Pro residues predominate over residues 20 to 29; the sequence is QPPPPPPHAP. Residues 69–104 form an RING-type zinc finger; the sequence is CPVCFDYVLPPILQCQAGHLVCNQCRQKLSCCPTCR. Residues 119–311 are SBD; sequence VASAVLFPCK…LGINVTISTC (193 aa). The SIAH-type zinc finger occupies 122-182; sequence AVLFPCKYAS…VMQHLTHSHK (61 aa). Zn(2+) is bound by residues cysteine 127, cysteine 134, histidine 146, cysteine 150, cysteine 157, cysteine 164, histidine 176, and histidine 181.

The protein belongs to the SINA (Seven in absentia) family. Homodimer. Widely expressed in early embryos until stage 40. It is then expressed in brain, spinal cord and in the developing and mature eye.

It is found in the cytoplasm. The enzyme catalyses S-ubiquitinyl-[E2 ubiquitin-conjugating enzyme]-L-cysteine + [acceptor protein]-L-lysine = [E2 ubiquitin-conjugating enzyme]-L-cysteine + N(6)-ubiquitinyl-[acceptor protein]-L-lysine.. It participates in protein modification; protein ubiquitination. E3 ubiquitin-protein ligase that mediates ubiquitination and subsequent proteasomal degradation of target proteins. E3 ubiquitin ligases accept ubiquitin from an E2 ubiquitin-conjugating enzyme in the form of a thioester and then directly transfers the ubiquitin to targeted substrates. Involved in eye morphogenesis, probably triggers the ubiquitin-mediated degradation of different substrates. May play a role in the regulation of the cellular clock function. In Xenopus laevis (African clawed frog), this protein is E3 ubiquitin-protein ligase siah2 (siah2).